Consider the following 336-residue polypeptide: N-acetyl-gamma-glutamyl-phosphate reductase (336 aa).

Residue cysteine 148 is part of the active site.

Belongs to the NAGSA dehydrogenase family. Type 1 subfamily.

Its subcellular location is the cytoplasm. The catalysed reaction is N-acetyl-L-glutamate 5-semialdehyde + phosphate + NADP(+) = N-acetyl-L-glutamyl 5-phosphate + NADPH + H(+). It participates in amino-acid biosynthesis; L-arginine biosynthesis; N(2)-acetyl-L-ornithine from L-glutamate: step 3/4. Its function is as follows. Catalyzes the NADPH-dependent reduction of N-acetyl-5-glutamyl phosphate to yield N-acetyl-L-glutamate 5-semialdehyde. The polypeptide is N-acetyl-gamma-glutamyl-phosphate reductase (Campylobacter curvus (strain 525.92)).